Consider the following 406-residue polypeptide: MKFVDEVSIHVKAGDGGNGLMSFRREKFIEKGGPNGGDGGDGGSIYLEADVNLNTLVDYRYTRRFDAQRGENGGSKDCTGAKGDDLVLPVPVGTTVIDANTQEIIGDLTEPGQRLMVAQGGWHGLGNTRFKSSTNRAPRQTTPGKPGEARDLKLELKVLADVGLLGLPNAGKSTFIRAVSAAKPKVADYPFTTLVPNLGVVSVGRYKSFVVADIPGLIEGAAEGAGLGIRFLKHLARTRILLHLVDMAPLDESDPADAAEVIVRELGRFSPALTERERWLVLNKMDQILDPAERDARKQAVIERLGWEGPVYVISALERDGTEALSQDIMRYLDERTLRLEEDPQYAEELAELDQRIEDEARARLQALDDARALRRSGLKNAGAADDDDFDDEEDDGDGPEIFYVP.

Residues 1–159 (MKFVDEVSIH…RDLKLELKVL (159 aa)) enclose the Obg domain. The tract at residues 127–148 (NTRFKSSTNRAPRQTTPGKPGE) is disordered. Residues 129–143 (RFKSSTNRAPRQTTP) show a composition bias toward polar residues. The OBG-type G domain occupies 160–334 (ADVGLLGLPN…LSQDIMRYLD (175 aa)). GTP is bound by residues 166-173 (GLPNAGKS), 191-195 (FTTLV), 213-216 (DIPG), 283-286 (NKMD), and 315-317 (SAL). Residues S173 and T193 each contribute to the Mg(2+) site. Residues 378-406 (GLKNAGAADDDDFDDEEDDGDGPEIFYVP) are disordered. Over residues 385–399 (ADDDDFDDEEDDGDG) the composition is skewed to acidic residues.

Belongs to the TRAFAC class OBG-HflX-like GTPase superfamily. OBG GTPase family. Monomer. Mg(2+) serves as cofactor.

It is found in the cytoplasm. Its function is as follows. An essential GTPase which binds GTP, GDP and possibly (p)ppGpp with moderate affinity, with high nucleotide exchange rates and a fairly low GTP hydrolysis rate. Plays a role in control of the cell cycle, stress response, ribosome biogenesis and in those bacteria that undergo differentiation, in morphogenesis control. The chain is GTPase Obg from Pseudomonas paraeruginosa (strain DSM 24068 / PA7) (Pseudomonas aeruginosa (strain PA7)).